A 170-amino-acid polypeptide reads, in one-letter code: Acireductone dioxygenase (170 aa).

Fe(2+) is bound by residues His-99, His-101, Glu-105, and His-144. Positions 99, 101, 105, and 144 each coordinate Ni(2+).

This sequence belongs to the acireductone dioxygenase (ARD) family. In terms of assembly, monomer. The cofactor is Fe(2+). It depends on Ni(2+) as a cofactor.

It catalyses the reaction 1,2-dihydroxy-5-(methylsulfanyl)pent-1-en-3-one + O2 = 3-(methylsulfanyl)propanoate + CO + formate + 2 H(+). The enzyme catalyses 1,2-dihydroxy-5-(methylsulfanyl)pent-1-en-3-one + O2 = 4-methylsulfanyl-2-oxobutanoate + formate + 2 H(+). It functions in the pathway amino-acid biosynthesis; L-methionine biosynthesis via salvage pathway; L-methionine from S-methyl-5-thio-alpha-D-ribose 1-phosphate: step 5/6. Catalyzes 2 different reactions between oxygen and the acireductone 1,2-dihydroxy-3-keto-5-methylthiopentene (DHK-MTPene) depending upon the metal bound in the active site. Fe-containing acireductone dioxygenase (Fe-ARD) produces formate and 2-keto-4-methylthiobutyrate (KMTB), the alpha-ketoacid precursor of methionine in the methionine recycle pathway. Ni-containing acireductone dioxygenase (Ni-ARD) produces methylthiopropionate, carbon monoxide and formate, and does not lie on the methionine recycle pathway. This is Acireductone dioxygenase from Bacillus mycoides (strain KBAB4) (Bacillus weihenstephanensis).